The following is a 208-amino-acid chain: Type 4 adapter protein LvgA (208 aa).

In terms of assembly, the T4BSS is a complex nanomachine composed of several subcomplexes. This subunit is part of the Type IV Coupling Complex (T4CC), a subcomplex composed of the DotLMNYZ core and the IcmSW-LvgA adapter subunits, linked by the C-terminal tail of DotL. Interacts with DotL, IcmS and IcmW. Interacts with various effector proteins, including VpdB, SetA, PieA and SidH.

The protein localises to the cytoplasm. Its function is as follows. Component of the Dot/Icm type IVB secretion system (T4BSS), which is used to inject bacterial effector proteins into eukaryotic host cells. Part of a subcomplex which recruits effector proteins and delivers them to the core transmembrane subcomplex. Is a critical subunit for binding a subset of effector proteins. Recognizes more than one type of binding motif. May be a critical factor that confers host specificity. The protein is Type 4 adapter protein LvgA of Legionella pneumophila subsp. pneumophila (strain Philadelphia 1 / ATCC 33152 / DSM 7513).